The primary structure comprises 268 residues: 5'-nucleotidase SurE (268 aa).

A divalent metal cation-binding residues include Asp8, Asp9, Ser40, and Asn98.

The protein belongs to the SurE nucleotidase family. The cofactor is a divalent metal cation.

It localises to the cytoplasm. It catalyses the reaction a ribonucleoside 5'-phosphate + H2O = a ribonucleoside + phosphate. Functionally, nucleotidase that shows phosphatase activity on nucleoside 5'-monophosphates. This chain is 5'-nucleotidase SurE, found in Trichodesmium erythraeum (strain IMS101).